A 598-amino-acid polypeptide reads, in one-letter code: Elongation factor 4 (598 aa).

The tr-type G domain occupies 5 to 187 (ANIRNFSIIA…ALVEFIPAPT (183 aa)). Residues 17–22 (DHGKST) and 134–137 (NKID) each bind GTP.

This sequence belongs to the TRAFAC class translation factor GTPase superfamily. Classic translation factor GTPase family. LepA subfamily.

It localises to the cell inner membrane. It catalyses the reaction GTP + H2O = GDP + phosphate + H(+). In terms of biological role, required for accurate and efficient protein synthesis under certain stress conditions. May act as a fidelity factor of the translation reaction, by catalyzing a one-codon backward translocation of tRNAs on improperly translocated ribosomes. Back-translocation proceeds from a post-translocation (POST) complex to a pre-translocation (PRE) complex, thus giving elongation factor G a second chance to translocate the tRNAs correctly. Binds to ribosomes in a GTP-dependent manner. This is Elongation factor 4 from Psychrobacter arcticus (strain DSM 17307 / VKM B-2377 / 273-4).